A 407-amino-acid polypeptide reads, in one-letter code: Tyrosine--tRNA ligase (407 aa).

Tyr-35 provides a ligand contact to L-tyrosine. The 'HIGH' region signature appears at 40–49; the sequence is PTADSLHVGH. L-tyrosine-binding residues include Tyr-168 and Gln-172. Residues 228-232 carry the 'KMSKS' region motif; the sequence is KMGKT. Lys-231 contacts ATP. The 65-residue stretch at 341–405 folds into the S4 RNA-binding domain; the sequence is NLLVDLLVKC…RGKKNFNRIV (65 aa).

This sequence belongs to the class-I aminoacyl-tRNA synthetase family. TyrS type 1 subfamily. In terms of assembly, homodimer.

The protein resides in the cytoplasm. The catalysed reaction is tRNA(Tyr) + L-tyrosine + ATP = L-tyrosyl-tRNA(Tyr) + AMP + diphosphate + H(+). Its function is as follows. Catalyzes the attachment of tyrosine to tRNA(Tyr) in a two-step reaction: tyrosine is first activated by ATP to form Tyr-AMP and then transferred to the acceptor end of tRNA(Tyr). The sequence is that of Tyrosine--tRNA ligase from Clostridium botulinum (strain ATCC 19397 / Type A).